Consider the following 152-residue polypeptide: Neuromedin-S (152 aa).

A signal peptide spans 1-26 (MKHPFPQFPPILVIYCFCMLQIPSSG). 3 consecutive propeptides follow at residues 27 to 69 (ASPP…VYKR), 70 to 105 (FLFHYSRAWKSTHPVNSEFAPVHPLMRLAAKLPSRR), and 106 to 108 (MKR). Position 144 is an asparagine amide (asparagine 144). Residues 147-152 (YTDKVQ) constitute a propeptide that is removed on maturation.

Belongs to the NmU family. Expressed in the CNS, spleen and testis. Specifically expressed in the suprachiasmatic nuclei (SCN) of the hypothalamus.

It is found in the secreted. Functionally, implicated in the regulation of circadian rhythms through autocrine and/or paracrine actions. Stimulates the contraction of rectum and elevation of blood pressure. This chain is Neuromedin-S (Nms), found in Rattus norvegicus (Rat).